A 249-amino-acid polypeptide reads, in one-letter code: MALDQSFEDAALLGELYGEGAFCFKSKKPEPITVSVPSDDTDDSNFDCNICLDSVQEPVVTLCGHLFCWPCIHKWLDVQSFSTSDEYQRHRQCPVCKSKVSHSTLVPLYGRGRCTTQEEGKNSVPKRPVGPVYRLEMPNSPYASTDLRLSQRVHFNSPQEGYYPVSGVMSSNSLSYSAVLDPVMVMVGEMVATRLFGTRVMDRFAYPDTYNLAGTSGPRMRRRIMQADKSLGRIFFFFMCCVVLCLLLF.

The RING-type zinc finger occupies cysteine 48–lysine 97. The helical; Anchor for type IV membrane protein transmembrane segment at leucine 231–leucine 248 threads the bilayer.

Ubiquitous. Highly expressed in roots.

The protein resides in the endoplasmic reticulum membrane. It catalyses the reaction S-ubiquitinyl-[E2 ubiquitin-conjugating enzyme]-L-cysteine + [acceptor protein]-L-lysine = [E2 ubiquitin-conjugating enzyme]-L-cysteine + N(6)-ubiquitinyl-[acceptor protein]-L-lysine.. Its pathway is protein modification; protein ubiquitination. E3 ubiquitin-protein ligase that promotes the ubiquitination and proteasomal degradation of aquaporin PIP2-1. Forms a ubiquitin ligase complex in cooperation with the E2 enzymes UCB8/UCB10. The sequence is that of E3 ubiquitin-protein ligase RMA1 (RMA1) from Arabidopsis thaliana (Mouse-ear cress).